A 252-amino-acid polypeptide reads, in one-letter code: Sororin (252 aa).

2 disordered regions span residues Met-1–Thr-48 and Ala-72–Val-142. A phosphoserine mark is found at Ser-21, Ser-33, Ser-35, Ser-75, Ser-79, and Ser-83. Residues Leu-86 to Lys-104 show a composition bias toward basic and acidic residues. The KEN box motif lies at Lys-88–Asn-90. At Thr-98 the chain carries Phosphothreonine. The span at Thr-105–Pro-116 shows a compositional bias: low complexity. A Phosphoserine modification is found at Ser-107. A phosphothreonine mark is found at Thr-111 and Thr-115. Residues Ser-124–Lys-140 are compositionally biased toward basic and acidic residues. Residue Ser-154 is modified to Phosphoserine. Thr-159 carries the post-translational modification Phosphothreonine. An FGF motif motif is present at residues Phe-166–Phe-168. A disordered region spans residues Trp-199–Met-222. Residue Ser-209 is modified to Phosphoserine. Residues Leu-230–Glu-252 are C-terminal Sororin domain.

The protein belongs to the sororin family. Interacts with the APC/C complex. Interacts with the chromatin-bound cohesin complex; the interaction is indirect, occurs after DNA replication and requires acetylation of the cohesin component SMC3. Interacts (via the FGF motif) with PDS5A and PDS5B; the interaction is direct and prevents the interaction of PDS5A with WAPL. Post-translationally, phosphorylated. Phosphorylation, as cells enter mitosis, disrupts the interaction with PDS5A and relieves the inhibition of WAPL by CDCA5. In terms of processing, ubiquitinated by the APC/C complex in G1, leading to its degradation.

The protein localises to the nucleus. It localises to the chromosome. It is found in the cytoplasm. Regulator of sister chromatid cohesion in mitosis stabilizing cohesin complex association with chromatin. May antagonize the action of WAPL which stimulates cohesin dissociation from chromatin. Cohesion ensures that chromosome partitioning is accurate in both meiotic and mitotic cells and plays an important role in DNA repair. Required for efficient DNA double-stranded break repair. The protein is Sororin (CDCA5) of Homo sapiens (Human).